The sequence spans 163 residues: Shikimate kinase (163 aa).

10-15 contributes to the ATP binding site; the sequence is GVGKTT. Threonine 14 lines the Mg(2+) pocket. Residues aspartate 28, arginine 52, and glycine 75 each contribute to the substrate site. Arginine 116 provides a ligand contact to ATP. Residue arginine 134 coordinates substrate.

The protein belongs to the shikimate kinase family. As to quaternary structure, monomer. Mg(2+) is required as a cofactor.

The protein resides in the cytoplasm. The enzyme catalyses shikimate + ATP = 3-phosphoshikimate + ADP + H(+). It participates in metabolic intermediate biosynthesis; chorismate biosynthesis; chorismate from D-erythrose 4-phosphate and phosphoenolpyruvate: step 5/7. Its function is as follows. Catalyzes the specific phosphorylation of the 3-hydroxyl group of shikimic acid using ATP as a cosubstrate. This is Shikimate kinase from Streptococcus suis (strain 98HAH33).